We begin with the raw amino-acid sequence, 322 residues long: N-acetyl-gamma-glutamyl-phosphate reductase 2 (322 aa).

Residue Cys-117 is part of the active site.

Belongs to the NAGSA dehydrogenase family. Type 2 subfamily.

The protein resides in the cytoplasm. The catalysed reaction is N-acetyl-L-glutamate 5-semialdehyde + phosphate + NADP(+) = N-acetyl-L-glutamyl 5-phosphate + NADPH + H(+). It participates in amino-acid biosynthesis; L-arginine biosynthesis; N(2)-acetyl-L-ornithine from L-glutamate: step 3/4. Functionally, catalyzes the NADPH-dependent reduction of N-acetyl-5-glutamyl phosphate to yield N-acetyl-L-glutamate 5-semialdehyde. This chain is N-acetyl-gamma-glutamyl-phosphate reductase 2, found in Nostoc sp. (strain PCC 7120 / SAG 25.82 / UTEX 2576).